The following is a 513-amino-acid chain: uncharacterized protein (513 aa).

5 helical membrane passes run 262–282 (FAIF…FWQL), 304–324 (YMFL…ITYH), 341–361 (EPIP…FEAL), 382–402 (LVIG…VIIV), and 429–449 (MFLA…ILVL). Residues 489-513 (PGTYSRGNGQKGAKREDPKDEENNI) form a disordered region. The span at 501-513 (AKREDPKDEENNI) shows a compositional bias: basic and acidic residues.

It belongs to the GerABKA family.

The protein localises to the cell membrane. This is an uncharacterized protein from Bacillus subtilis (strain 168).